Here is a 1404-residue protein sequence, read N- to C-terminus: MKDLLKFLKQQSKTEEFEGIKIGLASPDLIRSWSFGEVKKPETINYRTFKPEREGLFCARIFGPVKDYECLCGKYKRLKHRGVICEKCGVEVTQTKVRRERMGHIDLASPVAHIWFLKSLPSRIGLMLDMTLRDIERVLYFESFVVIEPGMTSLERGQMLTEENYLDALEEYGDEFEAKMGAEAVLELLRAIELEKEIEMMREELPSINSETRRKKITKRLKLIEAFFQSGNKPEWMILKVLPVLPPDLRPLVPLDGGRFATSDLNDLYRRVINRNNRLKRLLDLAAPDIIVRNEKRMLQESVDALLDNGRRGRAITGSNKRPLKSLADMIKGKQGRFRQNLLGKRVDYSGRSVITVGPTLRLHQCGLPKKMALELFKPFIYGKLEGRGLATTIKAAKKMVEREVPEVWDVLDDVIREHPVMLNRAPTLHRLGIQAFEPVLIEGKAIQLHPLVCAAYNADFDGDQMAVHVPLTLEAQLEARSLMMSTNNILSPANGEPVITPSQDVVLGLYYTSRECVNGKGEGMAFESVAEAEKAYRTGAAELHARVKVRITETKTDEAGEKVKTRRIVDTTVGRALLSLILPKGLSFDLVNQNMGKKQISKLLNTCYRQLGLKDTVIFADQLMYTGFHFATVSGASVGINDMVIPDEKYTLVADAEAEVLEIQEQFQSGLVTAGERYNKVIDIWASANEKVSKAMMDNLSSETVINRDGEEEKQESFNSIYMMADSGARGSAAQIRQLAGMRGLMAKPDGSIIETPITANFREGLNVSQYFISTHGARKGLADTALKTANSGYLTRRLVDVAQDLVVIEEDCGTFEGLTMKPLIEGGDVVEPLRERVLGRVVAQDVFKPGTEEVLIPRNTLLDEAWCDTVEDNSIDEMIVRSVISCDTDFGVCAACYGRDLARGHIINQGEAIGVVAAQSIGEPGTQLTMRTFHIGGAASRASAENNVQVKNAGTLKLHNAKHVTNSEGKLVIVSRSSELAIIDELGREKERYKVPYGTVLEKLEDAPVAAGEIIANWDPHTHPIITEVAGSTKFVDMIEGVTMTRQTDELTGLSSIVVLDVAQRPTAGKEMRPMIRLVAADGGDLMIPGTEVPAQYFLPGNAIVNLDDNAPINVGDALARIPQESSKTRDITGGLPRVADLFEARKPKEPAILAEVSGTISFGKETKGKRRLVITPAEGGDHYEEMIPKWRNLNVFEGEKVERGEVIADGPEAAHDILRLRGIHNVANYIVNEVQDVYRLQGVKINDKHIEVIIRQMLRKCEIANAGDSEFLAGEQAEVSRVKIANRELEAQGKQPATFERELLGITKASLATESFISAASFQETTRVLTEAAVGGKSDKLRGLKENVIVGRLIPAGTGYSYHQKRAEAAVKPAAEEAPAISASEAEQNLADLLNLAGSSD.

Residues C70, C72, C85, and C88 each coordinate Zn(2+). 3 residues coordinate Mg(2+): D460, D462, and D464. Positions 814, 888, 895, and 898 each coordinate Zn(2+).

It belongs to the RNA polymerase beta' chain family. In terms of assembly, the RNAP catalytic core consists of 2 alpha, 1 beta, 1 beta' and 1 omega subunit. When a sigma factor is associated with the core the holoenzyme is formed, which can initiate transcription. Mg(2+) serves as cofactor. It depends on Zn(2+) as a cofactor.

It catalyses the reaction RNA(n) + a ribonucleoside 5'-triphosphate = RNA(n+1) + diphosphate. In terms of biological role, DNA-dependent RNA polymerase catalyzes the transcription of DNA into RNA using the four ribonucleoside triphosphates as substrates. This chain is DNA-directed RNA polymerase subunit beta', found in Shewanella piezotolerans (strain WP3 / JCM 13877).